Consider the following 96-residue polypeptide: uncharacterized protein (96 aa).

The next 2 helical transmembrane spans lie at 27 to 47 (LAFR…ALLI) and 50 to 70 (LSGV…SIVF).

Its subcellular location is the cell membrane. This is an uncharacterized protein from Haemophilus influenzae (strain ATCC 51907 / DSM 11121 / KW20 / Rd).